A 1076-amino-acid polypeptide reads, in one-letter code: ESX secretion system protein YueB (1076 aa).

Residues 9-29 (IKLISAVIIILLLPVLFFRFI) traverse the membrane as a helical segment. Disordered stretches follow at residues 372–404 (RLSL…DIED) and 423–552 (IKDI…ETDI). The segment covering 423 to 439 (IKDISEGLKEPEQEKPT) has biased composition (basic and acidic residues). Polar residues-rich tracts occupy residues 449 to 495 (DDSP…NIET) and 503 to 522 (SKNV…SKTD). Residues 552-622 (ISGAKKRLNE…TKKLVDFDNN (71 aa)) are a coiled coil. The next 5 helical transmembrane spans lie at 904 to 924 (TVPP…IGYF), 938 to 958 (ALFG…GLNI), 964 to 984 (DQTI…SAFI), 995 to 1015 (GWVA…DLIM), and 1040 to 1060 (TMGI…PLII).

Belongs to the EsaA family.

The protein resides in the cell membrane. In terms of biological role, required for YukE secretion. Probable component or regulator of the ESX/ESAT-6-like secretion system (BsEss). Bacteriophage SPP1 receptor. Essential for the irreversible adsorption of the bacteriophage. The polypeptide is ESX secretion system protein YueB (yueB) (Bacillus subtilis (strain 168)).